A 46-amino-acid chain; its full sequence is U1-plectoxin-Pt1f (46 aa).

5 disulfides stabilise this stretch: Cys-4–Cys-18, Cys-11–Cys-24, Cys-17–Cys-35, Cys-21–Cys-44, and Cys-26–Cys-33.

Belongs to the neurotoxin 02 (plectoxin) family. 02 (plectoxin) subfamily. Expressed by the venom gland.

It is found in the secreted. Functionally, potent toxin that may paralyze and/or kill insect pests such as H.virescens (lepidoptera), S.exigua (beet armyworm) and M.sexta (tobacco hornworm). This is U1-plectoxin-Pt1f from Plectreurys tristis (Spider).